The primary structure comprises 301 residues: Acetyl-coenzyme A carboxylase carboxyl transferase subunit beta (301 aa).

Residues 25-294 (LWIKDPSTGE…NSDAPAPQKP (270 aa)) form the CoA carboxyltransferase N-terminal domain.

It belongs to the AccD/PCCB family. Acetyl-CoA carboxylase is a heterohexamer composed of biotin carboxyl carrier protein (AccB), biotin carboxylase (AccC) and two subunits each of ACCase subunit alpha (AccA) and ACCase subunit beta (AccD).

It is found in the cytoplasm. It catalyses the reaction N(6)-carboxybiotinyl-L-lysyl-[protein] + acetyl-CoA = N(6)-biotinyl-L-lysyl-[protein] + malonyl-CoA. Its pathway is lipid metabolism; malonyl-CoA biosynthesis; malonyl-CoA from acetyl-CoA: step 1/1. Its function is as follows. Component of the acetyl coenzyme A carboxylase (ACC) complex. Biotin carboxylase (BC) catalyzes the carboxylation of biotin on its carrier protein (BCCP) and then the CO(2) group is transferred by the transcarboxylase to acetyl-CoA to form malonyl-CoA. This is Acetyl-coenzyme A carboxylase carboxyl transferase subunit beta from Brucella abortus (strain 2308).